Reading from the N-terminus, the 310-residue chain is tRNA-5-methyluridine(54) 2-sulfurtransferase (310 aa).

Residues C3, C6, C22, and H25 each contribute to the Zn(2+) site. Residues A53 and I79 each contribute to the ATP site. The [4Fe-4S] cluster site is built by C128 and C131. The cysteines at positions 128 and 220 are disulfide-linked. The ATP site is built by K135 and G154. Residue C220 participates in [4Fe-4S] cluster binding. Zn(2+) contacts are provided by C272, C275, C284, and C287.

The protein belongs to the TtcA family. TtuA subfamily. In terms of assembly, homodimer. [4Fe-4S] cluster serves as cofactor. The cofactor is Mg(2+).

The catalysed reaction is 5-methyluridine(54) in tRNA + hydrogen sulfide + ATP = 5-methyl-2-thiouridine(54) in tRNA + AMP + diphosphate. Its pathway is tRNA modification. In terms of biological role, catalyzes the ATP-dependent 2-thiolation of 5-methyluridine residue at position 54 in the T loop of tRNAs, leading to 5-methyl-2-thiouridine (m(5)s(2)U or s(2)T). This modification allows thermal stabilization of tRNAs in thermophilic microorganisms, and is required for cell growth at high temperatures. Can use free sulfide as sulfur source in vitro, which may be also the sulfur source in vivo. This is tRNA-5-methyluridine(54) 2-sulfurtransferase from Pyrococcus horikoshii (strain ATCC 700860 / DSM 12428 / JCM 9974 / NBRC 100139 / OT-3).